The chain runs to 223 residues: Ubiquitin carboxyl-terminal hydrolase isozyme L1 (223 aa).

Met-1 is subject to N-acetylmethionine. One can recognise a UCH catalytic domain in the interval 2–221 (QLKPMEINPE…VRFSAVALCK (220 aa)). Positions 5–10 (PMEINP) are interaction with ubiquitin. Catalysis depends on Cys-90, which acts as the Nucleophile. At Ser-125 the chain carries Phosphoserine. His-161 acts as the Proton donor in catalysis. The tract at residues 211-216 (EVRFSA) is interaction with ubiquitin. Cys-220 carries S-farnesyl cysteine lipidation. The propeptide at 221 to 223 (KAA) is removed in mature form.

This sequence belongs to the peptidase C12 family. As to quaternary structure, monomer. Homodimer. Interacts with SNCA. Interacts with COPS5. In terms of processing, O-glycosylated. In terms of tissue distribution, found in neuronal cell bodies and processes throughout the neocortex (at protein level). Expressed in neurons and cells of the diffuse neuroendocrine system and their tumors. Weakly expressed in ovary. Down-regulated in brains from Parkinson disease and Alzheimer disease patients.

It is found in the cytoplasm. Its subcellular location is the endoplasmic reticulum membrane. The enzyme catalyses Thiol-dependent hydrolysis of ester, thioester, amide, peptide and isopeptide bonds formed by the C-terminal Gly of ubiquitin (a 76-residue protein attached to proteins as an intracellular targeting signal).. Its function is as follows. Deubiquitinase that plays a role in the regulation of several processes such as maintenance of synaptic function, cardiac function, inflammatory response or osteoclastogenesis. Abrogates the ubiquitination of multiple proteins including WWTR1/TAZ, EGFR, HIF1A and beta-site amyloid precursor protein cleaving enzyme 1/BACE1. In addition, recognizes and hydrolyzes a peptide bond at the C-terminal glycine of ubiquitin to maintain a stable pool of monoubiquitin that is a key requirement for the ubiquitin-proteasome and the autophagy-lysosome pathways. Regulates amyloid precursor protein/APP processing by promoting BACE1 degradation resulting in decreased amyloid beta production. Plays a role in the immune response by regulating the ability of MHC I molecules to reach cross-presentation compartments competent for generating Ag-MHC I complexes. Mediates the 'Lys-48'-linked deubiquitination of the transcriptional coactivator WWTR1/TAZ leading to its stabilization and inhibition of osteoclastogenesis. Deubiquitinates and stabilizes epidermal growth factor receptor EGFR to prevent its degradation and to activate its downstream mediators. Modulates oxidative activity in skeletal muscle by regulating key mitochondrial oxidative proteins. Enhances the activity of hypoxia-inducible factor 1-alpha/HIF1A by abrogateing its VHL E3 ligase-mediated ubiquitination and consequently inhibiting its degradation. The chain is Ubiquitin carboxyl-terminal hydrolase isozyme L1 (UCHL1) from Homo sapiens (Human).